A 647-amino-acid chain; its full sequence is MINITFPDGAVREFESGVTTFEIAQSISNSLAKKALAGKFNGKLIDTTRAITEDGSIEIVTPDHEDALPILRHSAAHLFAQAARRLFPDIHLGVGPAIEDGFYYDTDNTAGQISNEDLPRIEEEMQKIVKENFPSIREEVTKDEAREIFKNDPYKLELIEEHSEDEGGLTIYRQGEYVDLCRGPHVPSTGRIQIFHLLHVAGAYWRGNSDNAMMQRIYGTAWFDKKDLKNYLQMREEAKERDHRKLGKELDLFIISQEVGQGLPFWLPNGATIRRELERYIVNKELASGYQHVYTPPLASVELYKTSGHWDHYQEDMFPTMDMGDGEEFVLRPMNCPHHIQVFKHHVHSYRELPIRIAEIGMMHRYEKSGALTGLQRVREMSLNDGHLFVTPEQIQEEFQRALQLIIDVYEDFNLTDYRFRLSLRDPQDTHKYFDNDEMWENAQTMLRAALDEMGVNYFEAEGEAAFYGPKLDIQIKTALGKEETLSTIQLDFLLPERFDLKYIGADGEDHRPVMIHRGVISTMERFTAILIENYKGAFPTWLAPHQVTLIPVSNEKHVDYAWEVAKKLRDRGVRADVDERNEKMQFKIRASQTSKIPYQLIVGDKEMEDETVNVRRYGQKETQTVSVDNFVQAILADIANKSRVEK.

One can recognise a TGS domain in the interval 1-61 (MINITFPDGA…TEDGSIEIVT (61 aa)). Positions 242 to 540 (DHRKLGKELD…LIENYKGAFP (299 aa)) are catalytic. Zn(2+) contacts are provided by C336, H387, and H517.

The protein belongs to the class-II aminoacyl-tRNA synthetase family. In terms of assembly, homodimer. Zn(2+) is required as a cofactor.

The protein resides in the cytoplasm. The catalysed reaction is tRNA(Thr) + L-threonine + ATP = L-threonyl-tRNA(Thr) + AMP + diphosphate + H(+). Catalyzes the attachment of threonine to tRNA(Thr) in a two-step reaction: L-threonine is first activated by ATP to form Thr-AMP and then transferred to the acceptor end of tRNA(Thr). Also edits incorrectly charged L-seryl-tRNA(Thr). The chain is Threonine--tRNA ligase from Streptococcus pneumoniae (strain P1031).